The following is a 77-amino-acid chain: Acyl carrier protein (77 aa).

Residues 2–77 (SNIEERVKKI…AAIDYVNSAQ (76 aa)) form the Carrier domain. Serine 37 carries the post-translational modification O-(pantetheine 4'-phosphoryl)serine.

It belongs to the acyl carrier protein (ACP) family. 4'-phosphopantetheine is transferred from CoA to a specific serine of apo-ACP by AcpS. This modification is essential for activity because fatty acids are bound in thioester linkage to the sulfhydryl of the prosthetic group.

Its subcellular location is the cytoplasm. It participates in lipid metabolism; fatty acid biosynthesis. Carrier of the growing fatty acid chain in fatty acid biosynthesis. In Vibrio campbellii (strain ATCC BAA-1116), this protein is Acyl carrier protein.